The following is a 118-amino-acid chain: Large ribosomal subunit protein bL21c (118 aa).

It belongs to the bacterial ribosomal protein bL21 family. As to quaternary structure, part of the 50S ribosomal subunit.

It localises to the plastid. The protein resides in the chloroplast. In terms of biological role, this protein binds to 23S rRNA. This Psilotum nudum (Whisk fern) protein is Large ribosomal subunit protein bL21c.